Reading from the N-terminus, the 309-residue chain is MRRVILSNPRGFCAGVVRAIQVVEAALEKWGAPIYVKHEIVHNRHVVDDLRRRGAIFIENLSDIPCGGKVIYSAHGIPPEVREEAKNRNLFDIDATCVLVTKIHSAVKLYASKGYQIILIGKKKHVEVIGIYGEAPDSVTVVEKVEDVENLPFGIDTPLFFVTQTTLSLDDVAEITQALKVRYPNVITLPSSSVCYATQNRQEALRSVLPRVNFVYVVGDVQSSNSNRLREVAERRNIPARLVNSPDHISDEILNYSGDIAITAGASTPENIVQLCISRLKELIPDLQVEEDIFAIEDVVFQPPKELRN.

[4Fe-4S] cluster is bound at residue Cys-13. 2 residues coordinate (2E)-4-hydroxy-3-methylbut-2-enyl diphosphate: His-42 and His-75. Dimethylallyl diphosphate contacts are provided by His-42 and His-75. 2 residues coordinate isopentenyl diphosphate: His-42 and His-75. A [4Fe-4S] cluster-binding site is contributed by Cys-97. His-125 lines the (2E)-4-hydroxy-3-methylbut-2-enyl diphosphate pocket. Residue His-125 participates in dimethylallyl diphosphate binding. Isopentenyl diphosphate is bound at residue His-125. Residue Glu-127 is the Proton donor of the active site. Residue Thr-165 participates in (2E)-4-hydroxy-3-methylbut-2-enyl diphosphate binding. Cys-195 contributes to the [4Fe-4S] cluster binding site. (2E)-4-hydroxy-3-methylbut-2-enyl diphosphate-binding residues include Ser-223, Ser-224, Asn-225, and Ser-267. Ser-223, Ser-224, Asn-225, and Ser-267 together coordinate dimethylallyl diphosphate. Ser-223, Ser-224, Asn-225, and Ser-267 together coordinate isopentenyl diphosphate.

The protein belongs to the IspH family. [4Fe-4S] cluster serves as cofactor.

It carries out the reaction isopentenyl diphosphate + 2 oxidized [2Fe-2S]-[ferredoxin] + H2O = (2E)-4-hydroxy-3-methylbut-2-enyl diphosphate + 2 reduced [2Fe-2S]-[ferredoxin] + 2 H(+). It catalyses the reaction dimethylallyl diphosphate + 2 oxidized [2Fe-2S]-[ferredoxin] + H2O = (2E)-4-hydroxy-3-methylbut-2-enyl diphosphate + 2 reduced [2Fe-2S]-[ferredoxin] + 2 H(+). The protein operates within isoprenoid biosynthesis; dimethylallyl diphosphate biosynthesis; dimethylallyl diphosphate from (2E)-4-hydroxy-3-methylbutenyl diphosphate: step 1/1. It functions in the pathway isoprenoid biosynthesis; isopentenyl diphosphate biosynthesis via DXP pathway; isopentenyl diphosphate from 1-deoxy-D-xylulose 5-phosphate: step 6/6. Its function is as follows. Catalyzes the conversion of 1-hydroxy-2-methyl-2-(E)-butenyl 4-diphosphate (HMBPP) into a mixture of isopentenyl diphosphate (IPP) and dimethylallyl diphosphate (DMAPP). Acts in the terminal step of the DOXP/MEP pathway for isoprenoid precursor biosynthesis. The chain is 4-hydroxy-3-methylbut-2-enyl diphosphate reductase from Chlamydia felis (strain Fe/C-56) (Chlamydophila felis).